A 224-amino-acid chain; its full sequence is Steroid receptor RNA activator 1 (224 aa).

Disordered stretches follow at residues 1-90 and 201-224; these read MAEL…EPTS and AANEEKSAATAEKNHTIPGFQQAS. 3 positions are modified to phosphoserine: Ser-48, Ser-57, and Ser-75. Positions 58–76 are enriched in pro residues; that stretch reads PGPPPMGPPPPSSKAPRSP. A compositionally biased stretch (basic and acidic residues) spans 201–215; the sequence is AANEEKSAATAEKNH.

It belongs to the SRA1 family. As to quaternary structure, SRA1 RNA exists in a ribonucleoprotein complex containing NCOA1. The RNA also forms a complex with PUS1 and RARG in the nucleus. Interacts with AR. Highly expressed in liver and skeletal muscle and to a lesser extent in brain. Also expressed in both normal and tumorigenic breast epithelial cell lines. Significantly up-regulated in human tumors of the breast, ovary, and uterus.

Its subcellular location is the nucleus. The protein localises to the cytoplasm. Functional RNA which acts as a transcriptional coactivator that selectively enhances steroid receptor-mediated transactivation ligand-independently through a mechanism involving the modulating N-terminal domain (AF-1) of steroid receptors. Also mediates transcriptional coactivation of steroid receptors ligand-dependently through the steroid-binding domain (AF-2). Enhances cellular proliferation and differentiation and promotes apoptosis in vivo. May play a role in tumorigenesis. This chain is Steroid receptor RNA activator 1, found in Homo sapiens (Human).